Reading from the N-terminus, the 660-residue chain is Solute carrier family 5 member 4B (660 aa).

Over 1–27 (MASTLSPSITPQTEEPPVVPVRIQNAA) the chain is Cytoplasmic. Residues 28–48 (DISVIVIYFIVVLAVGLWSMV) form a helical membrane-spanning segment. The Extracellular segment spans residues 49 to 54 (RSNRGT). Residues 55–75 (VGGFFLAGHDMAWWPMGASLF) form a helical membrane-spanning segment. The Cytoplasmic segment spans residues 76–82 (ASNIGSN). The helical transmembrane segment at 83–103 (HFVGLAGTGAASGIAIAAVEW) threads the bilayer. At 104–105 (NA) the chain is on the extracellular side. Residues 106 to 126 (LLMVLVLGWVFLPIYIKAGVL) form a helical membrane-spanning segment. Residues 127–142 (TMPEYLRKRFGGKRLQ) lie on the Cytoplasmic side of the membrane. The chain crosses the membrane as a helical span at residues 143–163 (IYLSVLSLFIMVALQTSSIIF). Residues 164-166 (SGA) lie on the Extracellular side of the membrane. Residues 167–187 (IFIQLALGLNLYLAVFILLAI) form a helical membrane-spanning segment. The Cytoplasmic segment spans residues 188–208 (TAFYTVAGGLASVIYTDSVQT). Residues 209–229 (FIMLLGSLILMGFAFAEVGGY) form a helical membrane-spanning segment. Residues 230–277 (ESFTEKYMNAIPSVVEGDNLTISPKCYTPQPDSFHVFRDPVTGDIPWP) lie on the Extracellular side of the membrane. A helical transmembrane segment spans residues 278–298 (GLIFGMTILAIWYWCADQVIV). At 299-313 (QRCLCGKNMSHVKAA) the chain is on the cytoplasmic side. The helical transmembrane segment at 314–334 (CILCGYLKLLPMFLMVMPGMI) threads the bilayer. Residues 335-380 (SRILYTDKVACVVPSECEKQCGTAVGCTNYAYPTLVLELMPDGLRG) are Extracellular-facing. The helical transmembrane segment at 381–401 (LMLSVMLASLMSSLTSIFNSA) threads the bilayer. The Cytoplasmic portion of the chain corresponds to 402–423 (STLFTIDLYTKIRKKASERELM). The chain crosses the membrane as a helical span at residues 424–444 (IAGRIFGMVLIAVSILWVPLV). At 445–455 (QVSQNGQLFHY) the chain is on the extracellular side. The chain crosses the membrane as a helical span at residues 456-476 (IGSVSSYLGPPLGAVFMLAIF). The Cytoplasmic portion of the chain corresponds to 477–484 (FKRVNEQG). Residues 485 to 505 (AFWGLMVGLVVGLIRLIAEFV) form a helical membrane-spanning segment. Residues 506 to 526 (YGTGSCVAPSNCPKIICGVHY) lie on the Extracellular side of the membrane. Residues 527–547 (MYFAIILFFVSIIVILGVSFL) form a helical membrane-spanning segment. Residues 548–639 (TEPIPDVHLY…DTSEKPLWRT (92 aa)) are Cytoplasmic-facing. The chain crosses the membrane as a helical span at residues 640 to 660 (VMNINAVLLLGVAVFVHAYFA).

Belongs to the sodium:solute symporter (SSF) (TC 2.A.21) family. In terms of tissue distribution, expressed in small intestine. Expressed in kidney.

Its subcellular location is the cell membrane. It catalyses the reaction D-glucose(out) + 2 Na(+)(out) = D-glucose(in) + 2 Na(+)(in). Inhibited by phlorizin. Low-affinity sodium/D-glucose symporter. Generates D-glucose-induced depolarization in a pH-independent manner. The protein is Solute carrier family 5 member 4B of Mus musculus (Mouse).